Here is a 520-residue protein sequence, read N- to C-terminus: O-methyltransferase cicE (520 aa).

S-adenosyl-L-methionine-binding positions include 300–301 (GG), aspartate 323, 355–356 (NF), and arginine 371.

The protein belongs to the class I-like SAM-binding methyltransferase superfamily. Cation-independent O-methyltransferase family.

Its pathway is phytotoxin biosynthesis. Its function is as follows. O-methyltransferase; part of the gene cluster that mediates the biosynthesis of cichorine, a phytotoxin active against knapweed, corn, and soybeans. The first step in the pathway is performed by the non-reducing polyketide synthase pkbA that condenses one acetyl-CoA starter unit with 3 malonyl-CoA units. PkbA also catalyzes one methylation step to produce 3-methylorsellinate. The nonribosomal peptide synthase-like protein cicB, the cytochrome P450 monooxygenase cicH and the O-methyltransferase cicE are involved in the conversion of 3-methylorsellinate into nidulol. CicB converts 3-methylorsellinate to a yet unidentified intermediate, cicH may play a ring-closing role for cichorine and cicE is plausibly responsible for the methylation of one of the phenol groups. The oxidoreductase cicC acts downstream with still unidentified enzymes to further convert nidulol into cichorine. This Emericella nidulans (strain FGSC A4 / ATCC 38163 / CBS 112.46 / NRRL 194 / M139) (Aspergillus nidulans) protein is O-methyltransferase cicE.